A 155-amino-acid chain; its full sequence is Protein Smg homolog (155 aa).

It belongs to the Smg family.

This Methylococcus capsulatus (strain ATCC 33009 / NCIMB 11132 / Bath) protein is Protein Smg homolog.